We begin with the raw amino-acid sequence, 124 residues long: Small ribosomal subunit protein eS6 (124 aa).

Belongs to the eukaryotic ribosomal protein eS6 family.

The chain is Small ribosomal subunit protein eS6 from Methanococcus maripaludis (strain C7 / ATCC BAA-1331).